Here is a 150-residue protein sequence, read N- to C-terminus: Ankyrin repeat protein C18/B24 (150 aa).

An ANK repeat occupies Glu-41–Ser-73.

The protein is Ankyrin repeat protein C18/B24 of Vaccinia virus (strain Copenhagen) (VACV).